The primary structure comprises 1208 residues: Lysine-specific demethylase JMJ17 (1208 aa).

A PHD-type 1; degenerate zinc finger spans residues 1-36 (MLLCDSCNKGWHIYCLSPPLKHIPLGNWYCLECLNT). Zn(2+) contacts are provided by Cys-4, Cys-7, Cys-30, and Cys-33. A JmjC domain is found at 126–292 (EYCGSPWNLN…YGGSGAELYR (167 aa)). Positions 172, 174, and 260 each coordinate Fe cation. Zn(2+) is bound by residues Cys-369, Cys-372, Cys-383, Cys-385, Cys-392, His-395, Cys-400, and Cys-402. Residues 369 to 421 (CIICQQFLHLSAIVCNCRPSVFACLEHWKHLCECEPTKLRLEYRYTLAELDMM) form a C5HC2 zinc finger. The Nuclear localization signal signature appears at 613–620 (SKKISSAK). The segment at 1099 to 1145 (MLHCICLKPYNSRSMVSCSQCGEWYHTYCLKLHWRPKAYVCSACCPL) adopts a PHD-type 2 zinc-finger fold. Zn(2+) contacts are provided by Cys-1102, Cys-1104, Cys-1116, Cys-1119, His-1124, Cys-1127, Cys-1139, and Cys-1142.

It belongs to the JARID1 histone demethylase family. Fe(2+) is required as a cofactor. Expressed in inflorescences, roots, seedlings and siliques, and, at low levels, in leaves and stems.

Its subcellular location is the nucleus. It carries out the reaction N(6),N(6),N(6)-trimethyl-L-lysyl(4)-[histone H3] + 2-oxoglutarate + O2 = N(6),N(6)-dimethyl-L-lysyl(4)-[histone H3] + formaldehyde + succinate + CO2. It catalyses the reaction N(6),N(6)-dimethyl-L-lysyl(4)-[histone H3] + 2-oxoglutarate + O2 = N(6)-methyl-L-lysyl(4)-[histone H3] + formaldehyde + succinate + CO2. The catalysed reaction is N(6)-methyl-L-lysyl(4)-[histone H3] + 2-oxoglutarate + O2 = L-lysyl(4)-[histone H3] + formaldehyde + succinate + CO2. The enzyme catalyses N(6),N(6),N(6)-trimethyl-L-lysyl(4)-[histone H3] + 3 2-oxoglutarate + 3 O2 = L-lysyl(4)-[histone H3] + 3 formaldehyde + 3 succinate + 3 CO2. Functionally, functions as a histone H3 'Lys-4' (H3K4me) demethylase involved in the regulation of gene expression. Active on H3K4me1, H3K4me2 and H3K4me3. Repressor of the abscisic acid (ABA) signaling pathway, especially during stomatal closure regulation. Negative regulator of responses to dehydration stress by binding directly to the chromatin of SRK2E/OST1 and demethylating H3K4me3 to regulates its expression. Together with JMJ14 and JMJ16, required for plant growth and development. This Arabidopsis thaliana (Mouse-ear cress) protein is Lysine-specific demethylase JMJ17.